The sequence spans 718 residues: Nucleolar protein 11 (718 aa).

At K346 the chain carries N6-methyllysine.

Interacts with UTP4. Interacts with FBL/fibrillarin in a transcription-dependent manner. May associate with the proposed t-UTP subcomplex of the SSU processome containing at least UTP4, WDR43, HEATR1, UTP15, WDR75.

The protein localises to the nucleus. It is found in the nucleolus. In terms of biological role, ribosome biogenesis factor. May be required for both optimal rDNA transcription and small subunit (SSU) pre-rRNA processing at sites A', A0, 1 and 2b. In Bos taurus (Bovine), this protein is Nucleolar protein 11 (NOL11).